We begin with the raw amino-acid sequence, 154 residues long: 17 kDa surface antigen (154 aa).

The N-terminal stretch at 1–19 (MKLLSKIMIIALAASMLQA) is a signal peptide. Residue cysteine 20 is the site of N-palmitoyl cysteine attachment. Cysteine 20 carries S-diacylglycerol cysteine lipidation.

This sequence belongs to the rickettsiale 17 kDa surface antigen family.

It is found in the cell outer membrane. The polypeptide is 17 kDa surface antigen (omp) (Rickettsia montanensis).